A 521-amino-acid chain; its full sequence is Cytochrome P450 1A1 (521 aa).

Residue Phe-229 participates in substrate binding. Residue Cys-463 participates in heme binding.

Belongs to the cytochrome P450 family. Heme is required as a cofactor.

The protein resides in the endoplasmic reticulum membrane. It is found in the microsome membrane. The catalysed reaction is an organic molecule + reduced [NADPH--hemoprotein reductase] + O2 = an alcohol + oxidized [NADPH--hemoprotein reductase] + H2O + H(+). Cytochromes P450 are a group of heme-thiolate monooxygenases. They oxidize a variety of structurally unrelated compounds, including steroids, fatty acids, and xenobiotics. The sequence is that of Cytochrome P450 1A1 (cyp1a1) from Sparus aurata (Gilthead sea bream).